The chain runs to 204 residues: Terpene cyclase trt1 (204 aa).

A run of 5 helical transmembrane segments spans residues 44-64, 67-87, 103-122, 132-154, and 169-189; these read FMSI…YPIA, HWAG…FIVA, FARL…HLAL, FFWS…LVCR, and WFYI…FFYF.

This sequence belongs to the paxB family.

The protein localises to the membrane. It functions in the pathway secondary metabolite biosynthesis; terpenoid biosynthesis. Terpene cyclase; part of the gene cluster that mediates the biosynthesis of terretonin, a fungal meroterpenoid that acts as a mycotoxin. The first step of the pathway is the synthesis of 3,5-dimethylorsellinic acid (DMOA) by the polyketide synthase trt4. DMOA is then prenylated into farnesyl-DMOA by the polyprenyl transferase trt2. Methylation by the methyltransferase trt5 then leads to farnesyl-DMOA methyl ester which is further subject to epoxidation by the FAD-dependent monooxygenase trt8 to yield epoxyfarnesyl-DMOA methyl ester. Cyclization of epoxyfarnesyl-DMOA methyl ester by the terpene cyclase trt1 leads to a tetracycle intermediate which is in turn converted to preterretonin. Dehydrogenase trt9 comes next to transform preterretonin to preterrenoid. The FAD-dependent monooxygenase trt3 is then required for the C-hydroxylation at C16 of preterrenoid to yield terrenoid. The cytochrome P450 trt6 catalyzes three successive oxidations to transform terrenoid into an unstable intermediate, which then undergoes the D-ring expansion and unusual rearrangement of the methoxy group to afford the core skeleton of terretonin. Trt14 catalyzes the D-ring expansion of terretonin involving intramolecular methoxy rearrangement as well as the hydrolysis of the expanded D-ring and the methyl ester moiety. Finally, the nonheme iron-dependent dioxygenase trt7 accomplishes the last two oxidation reactions steps to complete the biosynthesis of terretonin. Terretonin C is produced via spontaneous decarboxylation of the terretonin precursor. Another shunt product of the terretonin biosynthesis is dihydrofarnesyl-DMOA, derived from epoxyfarnesyl-DMOA through hydrolysis of the epoxide. The protein is Terpene cyclase trt1 of Aspergillus terreus (strain NIH 2624 / FGSC A1156).